Here is a 117-residue protein sequence, read N- to C-terminus: Large ribosomal subunit protein uL18 (117 aa).

This sequence belongs to the universal ribosomal protein uL18 family. In terms of assembly, part of the 50S ribosomal subunit; part of the 5S rRNA/L5/L18/L25 subcomplex. Contacts the 5S and 23S rRNAs.

Functionally, this is one of the proteins that bind and probably mediate the attachment of the 5S RNA into the large ribosomal subunit, where it forms part of the central protuberance. The chain is Large ribosomal subunit protein uL18 from Coxiella burnetii (strain CbuK_Q154) (Coxiella burnetii (strain Q154)).